The primary structure comprises 496 residues: Lysine--tRNA ligase (496 aa).

Residues glutamate 409 and glutamate 416 each contribute to the Mg(2+) site.

The protein belongs to the class-II aminoacyl-tRNA synthetase family. Homodimer. It depends on Mg(2+) as a cofactor.

Its subcellular location is the cytoplasm. It catalyses the reaction tRNA(Lys) + L-lysine + ATP = L-lysyl-tRNA(Lys) + AMP + diphosphate. This Streptococcus thermophilus (strain ATCC BAA-491 / LMD-9) protein is Lysine--tRNA ligase.